Here is a 330-residue protein sequence, read N- to C-terminus: Ketol-acid reductoisomerase (NADP(+)) (330 aa).

Positions 2-182 constitute a KARI N-terminal Rossmann domain; sequence VKIFYDKDVT…GLTKVGVIQT (181 aa). NADP(+)-binding positions include 25-28, Arg-48, Ser-53, and 83-86; these read YGSQ and DEVQ. The active site involves His-108. Residue Gly-134 coordinates NADP(+). A KARI C-terminal knotted domain is found at 183–328; sequence TFREETETDL…KELRKMCGLE (146 aa). 4 residues coordinate Mg(2+): Asp-191, Glu-195, Glu-227, and Glu-231. Ser-252 lines the substrate pocket.

This sequence belongs to the ketol-acid reductoisomerase family. Requires Mg(2+) as cofactor.

The catalysed reaction is (2R)-2,3-dihydroxy-3-methylbutanoate + NADP(+) = (2S)-2-acetolactate + NADPH + H(+). The enzyme catalyses (2R,3R)-2,3-dihydroxy-3-methylpentanoate + NADP(+) = (S)-2-ethyl-2-hydroxy-3-oxobutanoate + NADPH + H(+). It participates in amino-acid biosynthesis; L-isoleucine biosynthesis; L-isoleucine from 2-oxobutanoate: step 2/4. Its pathway is amino-acid biosynthesis; L-valine biosynthesis; L-valine from pyruvate: step 2/4. Involved in the biosynthesis of branched-chain amino acids (BCAA). Catalyzes an alkyl-migration followed by a ketol-acid reduction of (S)-2-acetolactate (S2AL) to yield (R)-2,3-dihydroxy-isovalerate. In the isomerase reaction, S2AL is rearranged via a Mg-dependent methyl migration to produce 3-hydroxy-3-methyl-2-ketobutyrate (HMKB). In the reductase reaction, this 2-ketoacid undergoes a metal-dependent reduction by NADPH to yield (R)-2,3-dihydroxy-isovalerate. This Methanocaldococcus jannaschii (strain ATCC 43067 / DSM 2661 / JAL-1 / JCM 10045 / NBRC 100440) (Methanococcus jannaschii) protein is Ketol-acid reductoisomerase (NADP(+)).